A 294-amino-acid chain; its full sequence is Phosphatidylserine decarboxylase proenzyme (294 aa).

Active-site charge relay system; for autoendoproteolytic cleavage activity residues include Asp113, His169, and Ser256. The active-site Schiff-base intermediate with substrate; via pyruvic acid; for decarboxylase activity is Ser256. Ser256 carries the pyruvic acid (Ser); by autocatalysis modification.

The protein belongs to the phosphatidylserine decarboxylase family. PSD-B subfamily. Prokaryotic type II sub-subfamily. In terms of assembly, heterodimer of a large membrane-associated beta subunit and a small pyruvoyl-containing alpha subunit. Pyruvate serves as cofactor. In terms of processing, is synthesized initially as an inactive proenzyme. Formation of the active enzyme involves a self-maturation process in which the active site pyruvoyl group is generated from an internal serine residue via an autocatalytic post-translational modification. Two non-identical subunits are generated from the proenzyme in this reaction, and the pyruvate is formed at the N-terminus of the alpha chain, which is derived from the carboxyl end of the proenzyme. The autoendoproteolytic cleavage occurs by a canonical serine protease mechanism, in which the side chain hydroxyl group of the serine supplies its oxygen atom to form the C-terminus of the beta chain, while the remainder of the serine residue undergoes an oxidative deamination to produce ammonia and the pyruvoyl prosthetic group on the alpha chain. During this reaction, the Ser that is part of the protease active site of the proenzyme becomes the pyruvoyl prosthetic group, which constitutes an essential element of the active site of the mature decarboxylase.

It localises to the cell membrane. It catalyses the reaction a 1,2-diacyl-sn-glycero-3-phospho-L-serine + H(+) = a 1,2-diacyl-sn-glycero-3-phosphoethanolamine + CO2. Its pathway is phospholipid metabolism; phosphatidylethanolamine biosynthesis; phosphatidylethanolamine from CDP-diacylglycerol: step 2/2. Functionally, catalyzes the formation of phosphatidylethanolamine (PtdEtn) from phosphatidylserine (PtdSer). In Clostridium perfringens (strain SM101 / Type A), this protein is Phosphatidylserine decarboxylase proenzyme.